Here is a 157-residue protein sequence, read N- to C-terminus: Small ribosomal subunit protein uS17 (157 aa).

It belongs to the universal ribosomal protein uS17 family.

This Dunaliella tertiolecta (Green alga) protein is Small ribosomal subunit protein uS17 (RPS11).